The chain runs to 176 residues: MNKCFRCQPRISLFQFSLPRCYAAVQPGCPPPQEKPVVGLPHKPDPKTVKCDYIGPPDAQSNLRPYVRHYGDEETRLARSLRLKRIEVEAWNTDFWTKHNKRFYEEKEDFIRLHKESGTSEVSADQMSHFYKAFLDKNWRIHIMYNISWYLKNFDILTLAAAVQLQRLLALAKRRS.

Residues 1 to 23 constitute a mitochondrion transit peptide; the sequence is MNKCFRCQPRISLFQFSLPRCYA.

This sequence belongs to the COA8 family.

The protein localises to the mitochondrion inner membrane. Its function is as follows. May be required for cytochrome c complex (COX) assembly and function, COX being the terminal component of the mitochondrial respiratory chain. In terms of biological role, (Microbial infection) Required for optimal replication of E.chaffeensis. In Drosophila melanogaster (Fruit fly), this protein is COA8 family protein CG14806, mitochondrial.